We begin with the raw amino-acid sequence, 475 residues long: Ribulose bisphosphate carboxylase large chain (475 aa).

Positions 1 to 2 are excised as a propeptide; that stretch reads MA. An N-acetylproline modification is found at Pro-3. Lys-14 is subject to N6,N6,N6-trimethyllysine. Substrate contacts are provided by Asn-123 and Thr-173. Lys-175 (proton acceptor) is an active-site residue. Lys-177 is a substrate binding site. 3 residues coordinate Mg(2+): Lys-201, Asp-203, and Glu-204. The residue at position 201 (Lys-201) is an N6-carboxylysine. His-294 functions as the Proton acceptor in the catalytic mechanism. Arg-295, His-327, and Ser-379 together coordinate substrate.

Belongs to the RuBisCO large chain family. Type I subfamily. In terms of assembly, heterohexadecamer of 8 large chains and 8 small chains; disulfide-linked. The disulfide link is formed within the large subunit homodimers. Requires Mg(2+) as cofactor. In terms of processing, the disulfide bond which can form in the large chain dimeric partners within the hexadecamer appears to be associated with oxidative stress and protein turnover.

Its subcellular location is the plastid. The protein resides in the chloroplast. The enzyme catalyses 2 (2R)-3-phosphoglycerate + 2 H(+) = D-ribulose 1,5-bisphosphate + CO2 + H2O. It catalyses the reaction D-ribulose 1,5-bisphosphate + O2 = 2-phosphoglycolate + (2R)-3-phosphoglycerate + 2 H(+). In terms of biological role, ruBisCO catalyzes two reactions: the carboxylation of D-ribulose 1,5-bisphosphate, the primary event in carbon dioxide fixation, as well as the oxidative fragmentation of the pentose substrate in the photorespiration process. Both reactions occur simultaneously and in competition at the same active site. This chain is Ribulose bisphosphate carboxylase large chain, found in Bryopsis maxima (Green alga).